We begin with the raw amino-acid sequence, 235 residues long: Aspartate/glutamate leucyltransferase (235 aa).

Belongs to the R-transferase family. Bpt subfamily.

Its subcellular location is the cytoplasm. It carries out the reaction N-terminal L-glutamyl-[protein] + L-leucyl-tRNA(Leu) = N-terminal L-leucyl-L-glutamyl-[protein] + tRNA(Leu) + H(+). It catalyses the reaction N-terminal L-aspartyl-[protein] + L-leucyl-tRNA(Leu) = N-terminal L-leucyl-L-aspartyl-[protein] + tRNA(Leu) + H(+). Its function is as follows. Functions in the N-end rule pathway of protein degradation where it conjugates Leu from its aminoacyl-tRNA to the N-termini of proteins containing an N-terminal aspartate or glutamate. In Pseudomonas fluorescens (strain ATCC BAA-477 / NRRL B-23932 / Pf-5), this protein is Aspartate/glutamate leucyltransferase.